Here is a 247-residue protein sequence, read N- to C-terminus: NAD(P)H-quinone oxidoreductase subunit K (247 aa).

C63, C64, C128, and C159 together coordinate [4Fe-4S] cluster. Residues 218–247 (TRQAPPKELTEAIGMEVPPALASQKQKEEA) are disordered.

This sequence belongs to the complex I 20 kDa subunit family. In terms of assembly, NDH-1 can be composed of about 15 different subunits; different subcomplexes with different compositions have been identified which probably have different functions. The cofactor is [4Fe-4S] cluster.

Its subcellular location is the cellular thylakoid membrane. The catalysed reaction is a plastoquinone + NADH + (n+1) H(+)(in) = a plastoquinol + NAD(+) + n H(+)(out). It catalyses the reaction a plastoquinone + NADPH + (n+1) H(+)(in) = a plastoquinol + NADP(+) + n H(+)(out). In terms of biological role, NDH-1 shuttles electrons from an unknown electron donor, via FMN and iron-sulfur (Fe-S) centers, to quinones in the respiratory and/or the photosynthetic chain. The immediate electron acceptor for the enzyme in this species is believed to be plastoquinone. Couples the redox reaction to proton translocation, and thus conserves the redox energy in a proton gradient. Cyanobacterial NDH-1 also plays a role in inorganic carbon-concentration. This chain is NAD(P)H-quinone oxidoreductase subunit K, found in Crocosphaera subtropica (strain ATCC 51142 / BH68) (Cyanothece sp. (strain ATCC 51142)).